The sequence spans 379 residues: Cytochrome b (379 aa).

Helical transmembrane passes span 33 to 53, 77 to 98, 113 to 133, and 178 to 198; these read LGSL…FLAM, WTIR…YLHI, WNTG…GYVL, and FFTL…THLL. 2 residues coordinate heme b: histidine 83 and histidine 97. Positions 182 and 196 each coordinate heme b. A ubiquinone is bound at residue histidine 201. 4 helical membrane-spanning segments follow: residues 226–246, 288–308, 320–340, and 347–367; these read IKDI…TLLH, LGGV…PMTH, ISQC…WIGG, and FTTI…ILTP.

This sequence belongs to the cytochrome b family. The cytochrome bc1 complex contains 11 subunits: 3 respiratory subunits (MT-CYB, CYC1 and UQCRFS1), 2 core proteins (UQCRC1 and UQCRC2) and 6 low-molecular weight proteins (UQCRH/QCR6, UQCRB/QCR7, UQCRQ/QCR8, UQCR10/QCR9, UQCR11/QCR10 and a cleavage product of UQCRFS1). This cytochrome bc1 complex then forms a dimer. Requires heme b as cofactor.

It localises to the mitochondrion inner membrane. Component of the ubiquinol-cytochrome c reductase complex (complex III or cytochrome b-c1 complex) that is part of the mitochondrial respiratory chain. The b-c1 complex mediates electron transfer from ubiquinol to cytochrome c. Contributes to the generation of a proton gradient across the mitochondrial membrane that is then used for ATP synthesis. The sequence is that of Cytochrome b (MT-CYB) from Bradypus tridactylus (Pale-throated three-toed sloth).